The following is a 422-amino-acid chain: Zinc finger protein zfp-2 (422 aa).

A disordered region spans residues 95–119 (AIPCTSSSMQPSTSSNPSSGEHQPV). Positions 99 to 113 (TSSSMQPSTSSNPSS) are enriched in low complexity. 7 C2H2-type zinc fingers span residues 171-194 (YRCT…QEVH), 200-222 (FRCF…LKDH), 229-251 (FSCD…HKMH), 255-278 (STCQ…STAH), 300-322 (YSCS…ERIH), 328-350 (YSCG…IRTH), and 356-379 (YGCG…LAAH).

As to expression, expressed in vulval cells and all somatic gonad structures such as spermatheca, sheath cells, uterine cells and distal tip cells.

It is found in the nucleus. Its function is as follows. Probable zinc finger transcription factor that acts as a transcriptional repressor. Acts redundantly with the transcriptional repressor lin-35 to control the development of somatic gonad lineages. May, in addition, suppress sensitivity to RNAi. In Caenorhabditis elegans, this protein is Zinc finger protein zfp-2.